A 352-amino-acid polypeptide reads, in one-letter code: Tropomodulin-3 (352 aa).

A Phosphoserine modification is found at Ser-25.

Belongs to the tropomodulin family. As to quaternary structure, binds to the N-terminus of tropomyosin and to actin. Interacts with FLII. In terms of tissue distribution, ubiquitous.

It localises to the cytoplasm. The protein resides in the cytoskeleton. Its function is as follows. Blocks the elongation and depolymerization of the actin filaments at the pointed end. The Tmod/TM complex contributes to the formation of the short actin protofilament, which in turn defines the geometry of the membrane skeleton. The chain is Tropomodulin-3 (Tmod3) from Mus musculus (Mouse).